The sequence spans 255 residues: Phosphoribosylaminoimidazole-succinocarboxamide synthase A (255 aa).

The protein belongs to the SAICAR synthetase family.

It catalyses the reaction 5-amino-1-(5-phospho-D-ribosyl)imidazole-4-carboxylate + L-aspartate + ATP = (2S)-2-[5-amino-1-(5-phospho-beta-D-ribosyl)imidazole-4-carboxamido]succinate + ADP + phosphate + 2 H(+). It functions in the pathway purine metabolism; IMP biosynthesis via de novo pathway; 5-amino-1-(5-phospho-D-ribosyl)imidazole-4-carboxamide from 5-amino-1-(5-phospho-D-ribosyl)imidazole-4-carboxylate: step 1/2. The sequence is that of Phosphoribosylaminoimidazole-succinocarboxamide synthase A (purC1) from Bradyrhizobium diazoefficiens (strain JCM 10833 / BCRC 13528 / IAM 13628 / NBRC 14792 / USDA 110).